A 396-amino-acid polypeptide reads, in one-letter code: 1-deoxy-D-xylulose 5-phosphate reductoisomerase (396 aa).

NADPH contacts are provided by T15, G16, S17, I18, G41, and N129. K130 contributes to the 1-deoxy-D-xylulose 5-phosphate binding site. E131 provides a ligand contact to NADPH. D155 contacts Mn(2+). 4 residues coordinate 1-deoxy-D-xylulose 5-phosphate: S156, E157, S182, and H205. E157 contributes to the Mn(2+) binding site. Residue G211 participates in NADPH binding. Residues S218, N223, K224, and E227 each coordinate 1-deoxy-D-xylulose 5-phosphate. Residue E227 coordinates Mn(2+).

This sequence belongs to the DXR family. The cofactor is Mg(2+). Mn(2+) serves as cofactor.

The catalysed reaction is 2-C-methyl-D-erythritol 4-phosphate + NADP(+) = 1-deoxy-D-xylulose 5-phosphate + NADPH + H(+). It participates in isoprenoid biosynthesis; isopentenyl diphosphate biosynthesis via DXP pathway; isopentenyl diphosphate from 1-deoxy-D-xylulose 5-phosphate: step 1/6. Catalyzes the NADPH-dependent rearrangement and reduction of 1-deoxy-D-xylulose-5-phosphate (DXP) to 2-C-methyl-D-erythritol 4-phosphate (MEP). This chain is 1-deoxy-D-xylulose 5-phosphate reductoisomerase, found in Xanthomonas axonopodis pv. citri (strain 306).